A 218-amino-acid chain; its full sequence is Embryonic polyadenylate-binding protein 2-A (218 aa).

Basic and acidic residues predominate over residues 1–16 (MSERVSEEPGLDKGDG). Disordered stretches follow at residues 1-26 (MSER…DDPE) and 169-218 (RTNM…NHPY). Positions 93 to 170 (RSVYVGNVDY…RTIKVLPKRT (78 aa)) constitute an RRM domain. The span at 205 to 218 (FRGCGRPGPLNHPY) shows a compositional bias: low complexity.

It is found in the cytoplasm. Binds the poly(A) tail of mRNA. Unable to interact with the cap-binding complex and is therefore unlikely to be involved in translation initiation. The polypeptide is Embryonic polyadenylate-binding protein 2-A (Pabpn1l-a) (Xenopus laevis (African clawed frog)).